A 319-amino-acid chain; its full sequence is Beta-xylosidase (319 aa).

The Proton acceptor role is filled by D14. The Proton donor role is filled by E222.

The protein belongs to the glycosyl hydrolase 43 family.

It carries out the reaction Hydrolysis of (1-&gt;4)-beta-D-xylans, to remove successive D-xylose residues from the non-reducing termini.. In terms of biological role, exoxylanase capable of acting on certain xylans and xylooligosaccharides. This chain is Beta-xylosidase (xynB), found in Xylanibacter ruminicola (Prevotella ruminicola).